Here is an 892-residue protein sequence, read N- to C-terminus: Iodate reductase subunit IdrA (892 aa).

3 residues coordinate [3Fe-4S] cluster: Cys27, Cys30, and Cys34. The segment covering Arg431–Ala442 has biased composition (gly residues). The interval Arg431–Glu452 is disordered.

The protein belongs to the prokaryotic molybdopterin-containing oxidoreductase family. As to quaternary structure, the iodate reductase (Idr) complex is composed of a molybdopterin-dependent iodate reductase (IdrA and IdrB subunits) and two associated peroxidases (IdrP1 and IdrP2). Requires [3Fe-4S] cluster as cofactor. Mo-bis(molybdopterin guanine dinucleotide) is required as a cofactor.

Its subcellular location is the periplasm. Involved in iodate respiration. Probably catalyzes the reduction of iodate (IO(3)(-)) to hypoiodous acid (HIO) and H(2)O(2), using a reduced cytochrome c as the electron donor. The polypeptide is Iodate reductase subunit IdrA (Pseudomonas sp. (strain SCT)).